The following is a 378-amino-acid chain: Probable pectin lyase C (378 aa).

An N-terminal signal peptide occupies residues 1–18 (MKVPFLQLLCLNAALASA). 2 disulfide bridges follow: Cys-81/Cys-100 and Cys-90/Cys-220. Asn-123 is a glycosylation site (N-linked (GlcNAc...) asparagine). Arg-250 is a catalytic residue. Cys-316 and Cys-324 are oxidised to a cystine.

The protein belongs to the polysaccharide lyase 1 family.

Its subcellular location is the secreted. It catalyses the reaction Eliminative cleavage of (1-&gt;4)-alpha-D-galacturonan methyl ester to give oligosaccharides with 4-deoxy-6-O-methyl-alpha-D-galact-4-enuronosyl groups at their non-reducing ends.. In terms of biological role, pectinolytic enzymes consist of four classes of enzymes: pectin lyase, polygalacturonase, pectin methylesterase and rhamnogalacturonase. Among pectinolytic enzymes, pectin lyase is the most important in depolymerization of pectin, since it cleaves internal glycosidic bonds of highly methylated pectins. The sequence is that of Probable pectin lyase C (pelC) from Aspergillus niger.